Consider the following 329-residue polypeptide: Delta-aminolevulinic acid dehydratase (329 aa).

The active-site Schiff-base intermediate with substrate is K202. Residues R212 and R223 each contribute to the 5-aminolevulinate site. E239 contributes to the Mg(2+) binding site. K254 functions as the Schiff-base intermediate with substrate in the catalytic mechanism. Positions 280 and 319 each coordinate 5-aminolevulinate.

It belongs to the ALAD family. As to quaternary structure, homooctamer.

It carries out the reaction 2 5-aminolevulinate = porphobilinogen + 2 H2O + H(+). It functions in the pathway porphyrin-containing compound metabolism; protoporphyrin-IX biosynthesis; coproporphyrinogen-III from 5-aminolevulinate: step 1/4. Its function is as follows. Catalyzes an early step in the biosynthesis of tetrapyrroles. Binds two molecules of 5-aminolevulinate per subunit, each at a distinct site, and catalyzes their condensation to form porphobilinogen. This is Delta-aminolevulinic acid dehydratase (hemB) from Mycobacterium tuberculosis (strain CDC 1551 / Oshkosh).